Consider the following 386-residue polypeptide: Succinate--CoA ligase [ADP-forming] subunit beta (386 aa).

The 236-residue stretch at 9–244 (KEILRSFGVP…LDEEDPAEVE (236 aa)) folds into the ATP-grasp domain. ATP-binding positions include K46, 53–55 (GRG), E99, A102, and E107. Mg(2+) contacts are provided by N199 and D213. Substrate is bound by residues N264 and 321–323 (GIM).

Belongs to the succinate/malate CoA ligase beta subunit family. As to quaternary structure, heterotetramer of two alpha and two beta subunits. Mg(2+) serves as cofactor.

The enzyme catalyses succinate + ATP + CoA = succinyl-CoA + ADP + phosphate. It carries out the reaction GTP + succinate + CoA = succinyl-CoA + GDP + phosphate. The protein operates within carbohydrate metabolism; tricarboxylic acid cycle; succinate from succinyl-CoA (ligase route): step 1/1. Functionally, succinyl-CoA synthetase functions in the citric acid cycle (TCA), coupling the hydrolysis of succinyl-CoA to the synthesis of either ATP or GTP and thus represents the only step of substrate-level phosphorylation in the TCA. The beta subunit provides nucleotide specificity of the enzyme and binds the substrate succinate, while the binding sites for coenzyme A and phosphate are found in the alpha subunit. The sequence is that of Succinate--CoA ligase [ADP-forming] subunit beta from Acidovorax ebreus (strain TPSY) (Diaphorobacter sp. (strain TPSY)).